A 246-amino-acid chain; its full sequence is DNA repair protein RecO (246 aa).

It belongs to the RecO family.

In terms of biological role, involved in DNA repair and RecF pathway recombination. The sequence is that of DNA repair protein RecO from Methylorubrum populi (strain ATCC BAA-705 / NCIMB 13946 / BJ001) (Methylobacterium populi).